We begin with the raw amino-acid sequence, 139 residues long: Small ribosomal subunit protein uS12 (139 aa).

The disordered stretch occupies residues 1–21; that stretch reads MPTINQLVRKGRKAVQEKSTA. D102 bears the 3-methylthioaspartic acid mark.

Belongs to the universal ribosomal protein uS12 family. In terms of assembly, part of the 30S ribosomal subunit. Contacts proteins S8 and S17. May interact with IF1 in the 30S initiation complex.

With S4 and S5 plays an important role in translational accuracy. Its function is as follows. Interacts with and stabilizes bases of the 16S rRNA that are involved in tRNA selection in the A site and with the mRNA backbone. Located at the interface of the 30S and 50S subunits, it traverses the body of the 30S subunit contacting proteins on the other side and probably holding the rRNA structure together. The combined cluster of proteins S8, S12 and S17 appears to hold together the shoulder and platform of the 30S subunit. This Alkaliphilus metalliredigens (strain QYMF) protein is Small ribosomal subunit protein uS12.